The following is a 155-amino-acid chain: MPAADTCVRNARLADASAISRITEGYAGEGIMLKRSVENIIEHIRDFFVADYKGQVIGCCAIAFYTVKLAEIRSLAVLEEFRNKGIGRLLVEKAEAVLSEEGVNEVFVLTLNSGFFKRMGYKEIEKEYFPQKIWRDCTNCPKRMACDEIAMVKTL.

The 150-residue stretch at 6–155 (TCVRNARLAD…CDEIAMVKTL (150 aa)) folds into the N-acetyltransferase domain.

Belongs to the acetyltransferase family.

This is an uncharacterized protein from Chlorobaculum tepidum (strain ATCC 49652 / DSM 12025 / NBRC 103806 / TLS) (Chlorobium tepidum).